We begin with the raw amino-acid sequence, 217 residues long: Probable GTP-binding protein EngB (217 aa).

The region spanning 44–217 is the EngB-type G domain; it reads DRIEVCFAGR…TLRTIVATLG (174 aa). Residues 52–59, 79–83, 97–100, 164–167, and 198–200 each bind GTP; these read GRSNVGKS, GRTQE, DLPG, TKAD, and TSS. Residues serine 59 and threonine 81 each contribute to the Mg(2+) site.

Belongs to the TRAFAC class TrmE-Era-EngA-EngB-Septin-like GTPase superfamily. EngB GTPase family. Mg(2+) serves as cofactor.

Its function is as follows. Necessary for normal cell division and for the maintenance of normal septation. The protein is Probable GTP-binding protein EngB of Cereibacter sphaeroides (strain ATCC 17023 / DSM 158 / JCM 6121 / CCUG 31486 / LMG 2827 / NBRC 12203 / NCIMB 8253 / ATH 2.4.1.) (Rhodobacter sphaeroides).